A 246-amino-acid chain; its full sequence is Small ribosomal subunit protein uS2c (246 aa).

It belongs to the universal ribosomal protein uS2 family.

It localises to the plastid. It is found in the chloroplast. The chain is Small ribosomal subunit protein uS2c (rps2) from Pelargonium hortorum (Common geranium).